Consider the following 540-residue polypeptide: Transcription initiation factor IIF subunit alpha (540 aa).

Residues 1–26 (MDSQETKVFENVKQENPDEKKPKVEE) show a composition bias toward basic and acidic residues. Disordered regions lie at residues 1 to 39 (MDSQ…QSQQ) and 70 to 106 (IDPS…SSSN). 2 stretches are compositionally biased toward polar residues: residues 29–39 (SQNNASTQSQQ) and 89–106 (APSS…SSSN). Residues Ser-259 and Ser-261 each carry the phosphoserine modification. Residues 280 to 382 (MEGNEEDNKK…REEKLKSRFS (103 aa)) are a coiled coil. Positions 341–416 (YESDEEDEDP…SSQLQSPNTS (76 aa)) are disordered. The segment covering 359-369 (SEEEVLQEEEE) has biased composition (acidic residues). The segment covering 381–416 (FSANASKTNTPRPLERTPSSVSPVKASSQLQSPNTS) has biased composition (polar residues). Residue Ser-399 is modified to Phosphoserine.

Belongs to the TFIIF alpha subunit family. As to quaternary structure, component of the fcp1/TFIIF/polII complex via interaction of tfg3 with both tfg1/TFIIF-alpha and tfg2/TFIIF-beta subunits.

Its subcellular location is the nucleus. Functionally, TFIIF is a general transcription initiation factor that binds to RNA polymerase II and helps to recruit it to the initiation complex in collaboration with TFIIB. It promotes transcription elongation. This chain is Transcription initiation factor IIF subunit alpha (tfg1), found in Schizosaccharomyces pombe (strain 972 / ATCC 24843) (Fission yeast).